A 692-amino-acid chain; its full sequence is Protein adenylyltransferase SelO-1, mitochondrial (692 aa).

The N-terminal 24 residues, 1–24 (MASVGSRLTRFYISRPGVIARRFL), are a transit peptide targeting the mitochondrion. ATP-binding residues include G142, G144, K176, D188, G189, R246, and R253. D337 serves as the catalytic Proton acceptor. 2 residues coordinate Mg(2+): N338 and D347. D347 is a binding site for ATP. The segment at 637 to 676 (LEQPGWMGRGGAAIPGERDETEEEGSNSSGAGARGLVPYD) is disordered. U690 is a non-standard amino acid (selenocysteine).

This sequence belongs to the SELO family. It depends on Mg(2+) as a cofactor.

Its subcellular location is the mitochondrion. The enzyme catalyses L-tyrosyl-[protein] + ATP = O-(5'-adenylyl)-L-tyrosyl-[protein] + diphosphate. It carries out the reaction L-threonyl-[protein] + ATP = 3-O-(5'-adenylyl)-L-threonyl-[protein] + diphosphate. It catalyses the reaction L-seryl-[protein] + ATP = 3-O-(5'-adenylyl)-L-seryl-[protein] + diphosphate. In terms of biological role, catalyzes the transfer of adenosine 5'-monophosphate (AMP) to Ser, Thr and Tyr residues of target proteins (AMPylation). May be a redox-active mitochondrial selenoprotein which interacts with a redox target protein. The protein is Protein adenylyltransferase SelO-1, mitochondrial of Danio rerio (Zebrafish).